The primary structure comprises 133 residues: Ribonuclease P protein component (133 aa).

The protein belongs to the RnpA family. As to quaternary structure, consists of a catalytic RNA component (M1 or rnpB) and a protein subunit.

The enzyme catalyses Endonucleolytic cleavage of RNA, removing 5'-extranucleotides from tRNA precursor.. Functionally, RNaseP catalyzes the removal of the 5'-leader sequence from pre-tRNA to produce the mature 5'-terminus. It can also cleave other RNA substrates such as 4.5S RNA. The protein component plays an auxiliary but essential role in vivo by binding to the 5'-leader sequence and broadening the substrate specificity of the ribozyme. This Synechococcus sp. (strain JA-2-3B'a(2-13)) (Cyanobacteria bacterium Yellowstone B-Prime) protein is Ribonuclease P protein component.